The following is a 617-amino-acid chain: Syncytin-A (617 aa).

An N-terminal signal peptide occupies residues 1 to 17 (MVRPWVFCLLLFPCSSA). Topologically, residues 18 to 544 (YSDSWMPLVN…WIQWLGLGPW (527 aa)) are extracellular. A glycan (N-linked (GlcNAc...) asparagine) is linked at asparagine 27. The CXXC motif lies at 44–47 (CWVC). Disulfide bonds link cysteine 44/cysteine 47, cysteine 44/cysteine 505, and cysteine 497/cysteine 504. Residues asparagine 272 and asparagine 365 are each glycosylated (N-linked (GlcNAc...) asparagine). The interval 420–440 (LLPLLAGLGIASALGLGIAGI) is fusion peptide. A CX6CC motif is present at residues 497–505 (CLFLQEECC). The chain crosses the membrane as a helical span at residues 545–565 (LPSWLTSLMAPILFILVLLVF). Residues 566–617 (RPCLLNCLTHSVSRRMSSFIHTTTEGHVDKILLLRESQYKRLPQEPPEEDAV) are Cytoplasmic-facing.

It belongs to the gamma type-C retroviral envelope protein family. In terms of assembly, the mature protein consists of a trimer of SU-TM heterodimers. The SU-TM heterodimers are attached by a labile interchain disulfide bond. Post-translationally, synthesized as an inactive precursor that is heavily N-glycosylated and processed likely by furin in the Golgi to yield the mature SU and TM proteins. The cleavage site between SU and TM requires the minimal sequence [KR]-X-[KR]-R. In terms of processing, the CXXC motif is highly conserved across a broad range of retroviral envelope proteins. It is thought to participate in the formation of a labile disulfide bond possibly with the CX6CC motif present in the transmembrane protein. Isomerization of the intersubunit disulfide bond to an SU intrachain disulfide bond is thought to occur upon receptor recognition in order to allow membrane fusion. As to expression, highly expressed in placenta where it localizes to syncytiotrophoblasts of the labyrinthine zona. Specifically localizes to syncytiotrophoblast layer I (SynT-I). Also detected at very low levels in hippocampus, brain, testis and ovary.

Its subcellular location is the cell membrane. In terms of biological role, this endogenous retroviral envelope protein has retained its original fusogenic properties. Together with Synb, participates in trophoblast fusion and the formation of a syncytium during placenta morphogenesis. Syna is essential for placental development and is specifically required for formation of syncytiotrophoblast layer I (SynT-I). Promotes muscle myoblast fusion. Does not have immunosuppressive activity. The chain is Syncytin-A from Mus musculus (Mouse).